A 391-amino-acid chain; its full sequence is Phosphoglycerate kinase (391 aa).

Residues 21 to 23 (DLN), arginine 36, 59 to 62 (HLGR), arginine 113, and arginine 146 each bind substrate. Residues lysine 197, glutamate 319, and 345 to 348 (GGDT) each bind ATP.

This sequence belongs to the phosphoglycerate kinase family. In terms of assembly, monomer.

Its subcellular location is the cytoplasm. It carries out the reaction (2R)-3-phosphoglycerate + ATP = (2R)-3-phospho-glyceroyl phosphate + ADP. The protein operates within carbohydrate degradation; glycolysis; pyruvate from D-glyceraldehyde 3-phosphate: step 2/5. This Pseudoalteromonas atlantica (strain T6c / ATCC BAA-1087) protein is Phosphoglycerate kinase.